We begin with the raw amino-acid sequence, 203 residues long: Small ribosomal subunit protein uS4 (203 aa).

Residues 93-156 (RRLDNVVYRL…MKVPAILEAV (64 aa)) enclose the S4 RNA-binding domain.

The protein belongs to the universal ribosomal protein uS4 family. As to quaternary structure, part of the 30S ribosomal subunit. Contacts protein S5. The interaction surface between S4 and S5 is involved in control of translational fidelity.

In terms of biological role, one of the primary rRNA binding proteins, it binds directly to 16S rRNA where it nucleates assembly of the body of the 30S subunit. Its function is as follows. With S5 and S12 plays an important role in translational accuracy. The polypeptide is Small ribosomal subunit protein uS4 (Streptococcus equi subsp. equi (strain 4047)).